The chain runs to 123 residues: Fluoride-specific ion channel FluC (123 aa).

4 helical membrane-spanning segments follow: residues 7–27, 39–59, 68–88, and 101–121; these read MAIA…SGLL, MVNS…FWGF, FFGT…YETF, and LNIL…FMLA. Na(+)-binding residues include Gly-75 and Ser-78.

This sequence belongs to the fluoride channel Fluc/FEX (TC 1.A.43) family.

It localises to the cell membrane. It carries out the reaction fluoride(in) = fluoride(out). Its activity is regulated as follows. Na(+) is not transported, but it plays an essential structural role and its presence is essential for fluoride channel function. Fluoride-specific ion channel. Important for reducing fluoride concentration in the cell, thus reducing its toxicity. The chain is Fluoride-specific ion channel FluC from Thermococcus kodakarensis (strain ATCC BAA-918 / JCM 12380 / KOD1) (Pyrococcus kodakaraensis (strain KOD1)).